A 591-amino-acid polypeptide reads, in one-letter code: Paxillin (591 aa).

At Met-1 the chain carries N-acetylmethionine. Residue Asp-2 is modified to N-acetylserine. Positions 3 to 15 (DLDALLADLESTT) match the LD motif 1 motif. Residues 17–138 (HISKRPVFLS…PSPTVMSTSL (122 aa)) form a disordered region. Position 31 is a phosphotyrosine; by PTK6 (Tyr-31). Over residues 45 to 54 (VPPPVPPPPS) the composition is skewed to pro residues. Residues 69 to 106 (WQPSSSRFIHQQPQSSSPVYGSSAKTSSVSNPQDSVGS) are compositionally biased toward polar residues. A phosphoserine mark is found at Ser-83 and Ser-85. A Phosphotyrosine modification is found at Tyr-88. Ser-106 is modified (phosphoserine). Tyr-118 carries the post-translational modification Phosphotyrosine; by PTK6. 3 positions are modified to phosphoserine: Ser-119, Ser-126, and Ser-130. Over residues 121–137 (PNKQKSAEPSPTVMSTS) the composition is skewed to polar residues. Position 132 is a phosphothreonine (Thr-132). Phosphoserine is present on residues Ser-137, Ser-140, and Ser-143. An LD motif 2 motif is present at residues 144–156 (ELDRLLLELNAVQ). The tract at residues 159-260 (PPGFPADEAN…TQQQTRISAS (102 aa)) is disordered. At Tyr-181 the chain carries Phosphotyrosine. Residues 216–228 (SVESLLDELESSV) carry the LD motif 3 motif. A Phosphoserine modification is found at Ser-230. The segment covering 236 to 260 (TVNQGEMSSPQRVTSTQQQTRISAS) has biased composition (polar residues). Ser-244 is subject to Phosphoserine; by CDK5. Ser-250 bears the Phosphoserine; by SLK mark. Phosphoserine is present on residues Ser-258, Ser-261, Ser-272, Ser-303, Ser-322, Ser-332, and Ser-340. The interval 262–315 (ATRELDELMASLSDFKIQGLEQRADGERCWAAGWPRDGGRSSPGGQDEGGFMAQ) is required for binding to PARVA and ILK. Positions 265–276 (ELDELMASLSDF) match the LD motif 4 motif. Residues 291-335 (WAAGWPRDGGRSSPGGQDEGGFMAQGKTGSSSPPGGPPKPGSQLD) are disordered. The short motif at 333–345 (QLDSMLGSLQSDL) is the LD motif 5 element. LIM zinc-binding domains are found at residues 356–415 (GVCG…LFSP), 416–473 (RCYY…DMFA), 474–533 (PKCG…RRGS), and 534–591 (LCSG…KLFC). A Phosphoserine modification is found at Ser-533.

It belongs to the paxillin family. As to quaternary structure, interacts in vitro with VCL/vinculin as well as to the SH3 domain of SRC and, when tyrosine phosphorylated, to the SH2 domain of CRK. Interacts with GIT1. Interacts with NUDT16L1/SDOS. Interacts with PTK2/FAK1. Interacts with PTK2B/PYK2. Interacts with ASAP2. Interacts with unphosphorylated ITGA4. Interacts with RNF5. Interacts with PDCD10. Interacts with NEK3, the interaction is prolactin-dependent. Interacts with PTK6. Interacts with TGFB1I1. Interacts with SORBS1. Interacts with PARVB. Interacts (via LD motif 4) with PARVA/PARVIN. Interacts (via LD motif 4) with ILK. Interacts (via cytoplasmic domain) with CEACAM1; the interaction is phosphotyrosyl-dependent. Interacts with LIMA1; this complex stabilizes actin dynamics. Interacts with CD36 (via C-terminus). Interacts with TRIM15. Interacts with PAK4; PAK4 acts as a scaffold to suppport PAXI phosphorylation at Ser-272. Interacts strongly with PTK2/FAK1 and weakly with VCL/vinculin. In terms of assembly, interacts strongly with VCL/vinculin but only weakly with PTK2/FAK1. Phosphorylated by MAPK1/ERK2. Phosphorylated on tyrosine residues during integrin-mediated cell adhesion, embryonic development, fibroblast transformation and following stimulation of cells by mitogens. Phosphorylation at Ser-244 by CDK5 reduces its interaction with PTK2/FAK1 in matrix-cell focal adhesions (MCFA) during oligodendrocytes (OLs) differentiation. Phosphorylation at Tyr-31 and Tyr-118 by PTK6 promote the activation of RAC1 via CRK/CrKII, thereby promoting migration and invasion. Phosphorylation at Ser-250 by SLK is required for PXN redistribution and cell motility. Phosphorylation at Ser-272 promotes focal adhesion disassembly during cell migration.

It localises to the cytoplasm. The protein resides in the cytoskeleton. It is found in the cell junction. The protein localises to the focal adhesion. Its subcellular location is the cell cortex. In terms of biological role, cytoskeletal protein involved in actin-membrane attachment at sites of cell adhesion to the extracellular matrix (focal adhesion). Recruits other proteins such as TRIM15 to focal adhesion. This chain is Paxillin, found in Homo sapiens (Human).